An 842-amino-acid polypeptide reads, in one-letter code: MIKERKPSKSRAPGKGHKQIPGVAKESQPIARTRTGNVEFTPAKTHDMVRSLFDPTLKKSFLECWISLAILSNVVLCYFMATKFGASFTKKFFLWQYVFWRLCYNVGIGVVLHFQSNYETLTNFAKMRSLFSKKNQQWLARFCRFEIESKMPNTYCLEEYPEEFNVWLLFRQFVDLILMQDFTTYILFVVLSIPKTVLSSHTVSFALGVIMILFNVWVKVDAHRVVKDYAWYWGDFFFFQDSKLVFDGVFNVSPHPMYSIGYMGYYGLSLISGDYKVLLVSIGGHLLQFLFLKYCENPHIEKIYGSDAVENDNAHIDELLVKENPNYSKPLITKGLWFTNVDKLRLTDYFTILTVASIVLFTFFLKPSTKALFWATLVAKITTSLFISLVLHKQSTSKWFTRLFLKNGYTQVHSFYQWQFLYNYCLTVSYTLLILQTWSQFRHLESRNYTQIIFGFLLCWLQKWCDDEILTAISEFGWFYGDFFLTNYISSRKLNSRGIYRYLSNPERFLGVAGCWGAVLITHFSPYNLILAALWTAANIALVKLVEEPHVSKVYGTSERKSGVSKTLMGFKPIRRFSEIMDKMELRLVRHLTSNDSPFEEEAPTSEEAQWNEVVQLALQSVTANLAPNCEFKLGDGKCDTFIIPGPVEAHWKLPSKLYNNDDWIGLYKVFETGEDRQRTRVSSNGRWTGTNEAAFPYSGRPKKSIVKFQRTGDFVNGTVKFDHSLMFYEEGVYELRYHSGNTHKVLMISQPFRLSLPIVKAESAEELSEGLHQFLAEVHALDGNSFNPNSNRYLGDRFLKGLIKKASGVDLSVKYLRRINYDVSIIGKRVQEIKAVLENLE.

The disordered stretch occupies residues 1–28 (MIKERKPSKSRAPGKGHKQIPGVAKESQ). Topologically, residues 1–60 (MIKERKPSKSRAPGKGHKQIPGVAKESQPIARTRTGNVEFTPAKTHDMVRSLFDPTLKKS) are lumenal. The span at 8–18 (SKSRAPGKGHK) shows a compositional bias: basic residues. Residues 61–81 (FLECWISLAILSNVVLCYFMA) form a helical membrane-spanning segment. Residues 82–91 (TKFGASFTKK) lie on the Cytoplasmic side of the membrane. A helical membrane pass occupies residues 92-112 (FFLWQYVFWRLCYNVGIGVVL). The Lumenal portion of the chain corresponds to 113 to 172 (HFQSNYETLTNFAKMRSLFSKKNQQWLARFCRFEIESKMPNTYCLEEYPEEFNVWLLFRQ). A helical membrane pass occupies residues 173-193 (FVDLILMQDFTTYILFVVLSI). Topologically, residues 194–196 (PKT) are cytoplasmic. A helical transmembrane segment spans residues 197-217 (VLSSHTVSFALGVIMILFNVW). Topologically, residues 218-243 (VKVDAHRVVKDYAWYWGDFFFFQDSK) are lumenal. Residues 244–264 (LVFDGVFNVSPHPMYSIGYMG) form a helical membrane-spanning segment. The Cytoplasmic segment spans residues 265 to 270 (YYGLSL). A helical transmembrane segment spans residues 271 to 291 (ISGDYKVLLVSIGGHLLQFLF). Topologically, residues 292 to 345 (LKYCENPHIEKIYGSDAVENDNAHIDELLVKENPNYSKPLITKGLWFTNVDKLR) are lumenal. Residues 346–366 (LTDYFTILTVASIVLFTFFLK) form a helical membrane-spanning segment. Residues 367 to 370 (PSTK) lie on the Cytoplasmic side of the membrane. A helical transmembrane segment spans residues 371 to 391 (ALFWATLVAKITTSLFISLVL). Over 392-414 (HKQSTSKWFTRLFLKNGYTQVHS) the chain is Lumenal. A helical transmembrane segment spans residues 415–435 (FYQWQFLYNYCLTVSYTLLIL). Over 436 to 468 (QTWSQFRHLESRNYTQIIFGFLLCWLQKWCDDE) the chain is Cytoplasmic. The chain crosses the membrane as a helical span at residues 469-489 (ILTAISEFGWFYGDFFLTNYI). The Lumenal segment spans residues 490–514 (SSRKLNSRGIYRYLSNPERFLGVAG). A helical transmembrane segment spans residues 515 to 535 (CWGAVLITHFSPYNLILAALW). Residues 536-842 (TAANIALVKL…EIKAVLENLE (307 aa)) lie on the Cytoplasmic side of the membrane.

This sequence belongs to the class VI-like SAM-binding methyltransferase superfamily. CHO2 family.

The protein resides in the endoplasmic reticulum membrane. The enzyme catalyses a 1,2-diacyl-sn-glycero-3-phosphoethanolamine + S-adenosyl-L-methionine = a 1,2-diacyl-sn-glycero-3-phospho-N-methylethanolamine + S-adenosyl-L-homocysteine + H(+). Its pathway is phospholipid metabolism; phosphatidylcholine biosynthesis. Catalyzes the first step of the methylation pathway of phosphatidylcholine biosynthesis, the SAM-dependent methylation of phosphatidylethanolamine (PE) to phosphatidylmonomethylethanolamine (PMME). The polypeptide is Phosphatidylethanolamine N-methyltransferase (CHO2) (Lachancea thermotolerans (strain ATCC 56472 / CBS 6340 / NRRL Y-8284) (Yeast)).